Consider the following 456-residue polypeptide: tRNA-2-methylthio-N(6)-dimethylallyladenosine synthase (456 aa).

One can recognise an MTTase N-terminal domain in the interval 2–119; that stretch reads KKVFIKTYGC…LPDLIAARRR (118 aa). Residues Cys-11, Cys-48, Cys-82, Cys-156, Cys-160, and Cys-163 each contribute to the [4Fe-4S] cluster site. Residues 142 to 375 form the Radical SAM core domain; sequence RVDGASAYVS…QATIEENVAR (234 aa). The TRAM domain maps to 378–448; sequence QGMVGSVQRI…PHSLRGEVAE (71 aa).

The protein belongs to the methylthiotransferase family. MiaB subfamily. Monomer. It depends on [4Fe-4S] cluster as a cofactor.

It localises to the cytoplasm. It catalyses the reaction N(6)-dimethylallyladenosine(37) in tRNA + (sulfur carrier)-SH + AH2 + 2 S-adenosyl-L-methionine = 2-methylsulfanyl-N(6)-dimethylallyladenosine(37) in tRNA + (sulfur carrier)-H + 5'-deoxyadenosine + L-methionine + A + S-adenosyl-L-homocysteine + 2 H(+). Functionally, catalyzes the methylthiolation of N6-(dimethylallyl)adenosine (i(6)A), leading to the formation of 2-methylthio-N6-(dimethylallyl)adenosine (ms(2)i(6)A) at position 37 in tRNAs that read codons beginning with uridine. This chain is tRNA-2-methylthio-N(6)-dimethylallyladenosine synthase, found in Ralstonia pickettii (strain 12J).